The chain runs to 540 residues: MTVEESKKRKLTDDVAIKQNEKKIKKDKKVKDKKDKKDKKDKKDKKEKKEKKEKKEKNDKKDKKDKKDKKAEQVDKLSETTEQPSKQVKIGAYVENEELSKQPQSVIDEFFKENEVSVEDPSKLNLRPLLAFNQISLDKEVQNEIAKFPKPTPIQAVSWPYLLSGKDVIGVAETGSGKTFAFGVPAINNLLTSSSKPKGIKVLVISPTRELASQIYDNLVLLTQKVGIDCCVVYGGVPKDDQRRQIAKSNVVVATPGRLLDLIEEGSVDLSPVDYMVLDEADRMLEKGFEEDIKRIIGQTKSKDRQTLMFTATWPKEVRELASTFMKEPVKVSIGNRDELSANKRITQIVEVVDPRSKERKLLDLLKKYQSGPKKNDKVLIFALYKKEASRVERNLNYNGYKVAAIHGDLSQQQRTQALNEFKSGKSNLLLATDVAARGLDIPNVKTVINLTFPLTVEDYVHRIGRTGRAGQTGTAHTLFTEQEKHLAGGLVNVLNGANQPVPEDLIKFGTHTKRKEHGAYGAFFKDIDMSKKPKKITFD.

A compositionally biased stretch (basic and acidic residues) spans M1–D35. Residues M1–K89 are disordered. Over residues K36–K52 the composition is skewed to basic residues. Composition is skewed to basic and acidic residues over residues E53–D62 and D68–E79. The Q motif motif lies at L130–A156. Residues W159–V332 enclose the Helicase ATP-binding domain. A172 to T179 is an ATP binding site. The short motif at D279–D282 is the DEAD box element. In terms of domain architecture, Helicase C-terminal spans K361–G510.

Belongs to the DEAD box helicase family. DDX5/DBP2 subfamily.

Its subcellular location is the nucleus. It is found in the nucleolus. The enzyme catalyses ATP + H2O = ADP + phosphate + H(+). Its function is as follows. ATP-dependent RNA helicase required for 60S ribosomal subunit synthesis. Involved in efficient pre-rRNA processing, predominantly at site A3, which is necessary for the normal formation of 25S and 5.8S rRNAs. The polypeptide is ATP-dependent RNA helicase DBP3 (DBP3) (Candida glabrata (strain ATCC 2001 / BCRC 20586 / JCM 3761 / NBRC 0622 / NRRL Y-65 / CBS 138) (Yeast)).